Reading from the N-terminus, the 72-residue chain is MAKEELLEFPGEVTELLPNATFRVKLENEHEIIAHTAGKMRKNRIRVLAGDKVLVEMTPYDLTKGRITYRFK.

Residues 1-72 enclose the S1-like domain; the sequence is MAKEELLEFP…TKGRITYRFK (72 aa).

The protein belongs to the IF-1 family. In terms of assembly, component of the 30S ribosomal translation pre-initiation complex which assembles on the 30S ribosome in the order IF-2 and IF-3, IF-1 and N-formylmethionyl-tRNA(fMet); mRNA recruitment can occur at any time during PIC assembly.

It localises to the cytoplasm. Functionally, one of the essential components for the initiation of protein synthesis. Stabilizes the binding of IF-2 and IF-3 on the 30S subunit to which N-formylmethionyl-tRNA(fMet) subsequently binds. Helps modulate mRNA selection, yielding the 30S pre-initiation complex (PIC). Upon addition of the 50S ribosomal subunit IF-1, IF-2 and IF-3 are released leaving the mature 70S translation initiation complex. The chain is Translation initiation factor IF-1 from Maricaulis maris (strain MCS10) (Caulobacter maris).